Reading from the N-terminus, the 515-residue chain is Bifunctional purine biosynthesis protein PurH (515 aa).

In terms of domain architecture, MGS-like spans 1 to 145 (MTKRALISVS…KNHASVTVVV (145 aa)).

This sequence belongs to the PurH family.

It catalyses the reaction (6R)-10-formyltetrahydrofolate + 5-amino-1-(5-phospho-beta-D-ribosyl)imidazole-4-carboxamide = 5-formamido-1-(5-phospho-D-ribosyl)imidazole-4-carboxamide + (6S)-5,6,7,8-tetrahydrofolate. The enzyme catalyses IMP + H2O = 5-formamido-1-(5-phospho-D-ribosyl)imidazole-4-carboxamide. Its pathway is purine metabolism; IMP biosynthesis via de novo pathway; 5-formamido-1-(5-phospho-D-ribosyl)imidazole-4-carboxamide from 5-amino-1-(5-phospho-D-ribosyl)imidazole-4-carboxamide (10-formyl THF route): step 1/1. The protein operates within purine metabolism; IMP biosynthesis via de novo pathway; IMP from 5-formamido-1-(5-phospho-D-ribosyl)imidazole-4-carboxamide: step 1/1. The protein is Bifunctional purine biosynthesis protein PurH of Streptococcus suis.